We begin with the raw amino-acid sequence, 273 residues long: Dermonecrotic toxin LhSicTox-alphaIA2aii (273 aa).

Residue histidine 5 is part of the active site. The Mg(2+) site is built by glutamate 25 and aspartate 27. Residue histidine 41 is the Nucleophile of the active site. 2 disulfides stabilise this stretch: cysteine 45–cysteine 51 and cysteine 47–cysteine 190. Aspartate 85 contributes to the Mg(2+) binding site.

Belongs to the arthropod phospholipase D family. Class II subfamily. Mg(2+) serves as cofactor. As to expression, expressed by the venom gland.

The protein localises to the secreted. It catalyses the reaction an N-(acyl)-sphingosylphosphocholine = an N-(acyl)-sphingosyl-1,3-cyclic phosphate + choline. The enzyme catalyses an N-(acyl)-sphingosylphosphoethanolamine = an N-(acyl)-sphingosyl-1,3-cyclic phosphate + ethanolamine. It carries out the reaction a 1-acyl-sn-glycero-3-phosphocholine = a 1-acyl-sn-glycero-2,3-cyclic phosphate + choline. The catalysed reaction is a 1-acyl-sn-glycero-3-phosphoethanolamine = a 1-acyl-sn-glycero-2,3-cyclic phosphate + ethanolamine. Its function is as follows. Dermonecrotic toxins cleave the phosphodiester linkage between the phosphate and headgroup of certain phospholipids (sphingolipid and lysolipid substrates), forming an alcohol (often choline) and a cyclic phosphate. This toxin acts on sphingomyelin (SM). It may also act on ceramide phosphoethanolamine (CPE), lysophosphatidylcholine (LPC) and lysophosphatidylethanolamine (LPE), but not on lysophosphatidylserine (LPS), and lysophosphatidylglycerol (LPG). It acts by transphosphatidylation, releasing exclusively cyclic phosphate products as second products. Induces dermonecrosis, hemolysis, increased vascular permeability, edema, inflammatory response, and platelet aggregation. This is Dermonecrotic toxin LhSicTox-alphaIA2aii from Loxosceles hirsuta (Recluse spider).